The sequence spans 426 residues: O-methyltransferase pyvH (426 aa).

S-adenosyl-L-methionine-binding positions include 258–259 (GG), Asp-281, 308–309 (DF), and Arg-323. Catalysis depends on His-327, which acts as the Proton acceptor.

It belongs to the class I-like SAM-binding methyltransferase superfamily. Cation-independent O-methyltransferase family.

It participates in secondary metabolite biosynthesis. O-methyltransferase; part of the gene cluster that mediates the biosynthesis of pyranoviolin A, a pyranonigrin analog with a C-3 methoxy group. Initially, the PKS portion of pyvA synthesizes C-10 carbon chain from 5 molecules of malonyl-CoA, which is then condensed with the thiolation (T) domain-bound glycine activated by the adenylation (A) domain. The subsequent chain release by Dieckmann condensation (DKC) could be catalyzed by the TE domain present at the C-terminus of pyvA and/or the alpha/beta hydrolase pyvD, installing the tetramic acid moiety. The FAD-dependent monooxygenase pyvC next epoxidizes one of the olefins of the polyketide part, and the epoxide ring-opening induces the dihydro-gamma-pyrone ring formation. The cytochrome P450 monooxygeanse pyvB would be responsible for the 2 consecutive reactions, in which the dihydro-gamma-pyrone is oxidized to gamma-pyrone and C-7 is hydroxylated to yield pyranonigrin F. Finally, the O-methyltransferase pyvH methylates the C-3 hydroxy group to complete the biosynthesis. In Aspergillus violaceofuscus (strain CBS 115571), this protein is O-methyltransferase pyvH.